The chain runs to 423 residues: Deferrochelatase (423 aa).

The tat-type signal signal peptide spans 1 to 35 (MQYEDKNGVNEPSRRRLLKGIGALALAGSCPVAHA). Heme b is bound by residues 236 to 238 (GTA), His329, 334 to 336 (NPR), and Arg347.

Belongs to the DyP-type peroxidase family. EfeB subfamily. The heme-bound EfeB forms a homodimer whereas the apo-form mainly exists as a monomer. Part of a ferrous iron transporter composed of EfeU, EfeO and EfeB. Heme b serves as cofactor. Post-translationally, predicted to be exported by the Tat system. The position of the signal peptide cleavage has not been experimentally proven.

It localises to the periplasm. The catalysed reaction is heme b + 2 H(+) = protoporphyrin IX + Fe(2+). Involved in the recovery of exogenous heme iron. Extracts iron from heme while preserving the protoporphyrin ring intact. Also displays peroxidase activity on guaiacol and catechol in vitro. The deferrochelatase activity appears to be closely related to the peroxidation activity, but the link is unclear. The chain is Deferrochelatase (efeB) from Escherichia coli O157:H7.